Reading from the N-terminus, the 171-residue chain is MEHSTFLSGLVLATLLSQVSPFKIPVEELEDRVFVKCNTSVTWVEGTVGTLLTNNTRLDLGKRILDPRGIYRCNGTDIYKDKESAVQVHYRMCQNCVELDPATLAGIIVTDVIATLLLALGVFCFAGHETGRLSGAADTQALLRNDQVYQPLRDRDDAQYSRLGGNWARNK.

Positions methionine 1–proline 21 are cleaved as a signal peptide. Residues phenylalanine 22–alanine 105 are Extracellular-facing. An intrachain disulfide couples cysteine 37 to cysteine 73. Residues asparagine 38, asparagine 54, and asparagine 74 are each glycosylated (N-linked (GlcNAc...) asparagine). A helical transmembrane segment spans residues glycine 106–alanine 126. The Cytoplasmic portion of the chain corresponds to glycine 127–lysine 171. One can recognise an ITAM domain in the interval aspartate 138–asparagine 166. Residues tyrosine 149 and tyrosine 160 each carry the phosphotyrosine modification.

As to quaternary structure, the TCR-CD3 complex is composed of a CD3D/CD3E and a CD3G/CD3E heterodimers that preferentially associate with TCRalpha and TCRbeta, respectively, to form TCRalpha/CD3E/CD3G and TCRbeta/CD3G/CD3E trimers. In turn, the hexamer interacts with CD3Z homodimer to form the TCR-CD3 complex. Alternatively, TCRalpha and TCRbeta can be replaced by TCRgamma and TCRdelta. Interacts with coreceptors CD4 and CD8. In terms of processing, phosphorylated on Tyr residues after T-cell receptor triggering by LCK in association with CD4/CD8. CD3D is mostly present on T-lymphocytes with its TCR-CD3 partners. Present also in fetal NK-cells.

Its subcellular location is the cell membrane. Part of the TCR-CD3 complex present on T-lymphocyte cell surface that plays an essential role in adaptive immune response. When antigen presenting cells (APCs) activate T-cell receptor (TCR), TCR-mediated signals are transmitted across the cell membrane by the CD3 chains CD3D, CD3E, CD3G and CD3Z. All CD3 chains contain immunoreceptor tyrosine-based activation motifs (ITAMs) in their cytoplasmic domain. Upon TCR engagement, these motifs become phosphorylated by Src family protein tyrosine kinases LCK and FYN, resulting in the activation of downstream signaling pathways. In addition of this role of signal transduction in T-cell activation, CD3D plays an essential role in thymocyte differentiation. Indeed, participates in correct intracellular TCR-CD3 complex assembly and surface expression. In absence of a functional TCR-CD3 complex, thymocytes are unable to differentiate properly. Interacts with CD4 and CD8 and thus serves to establish a functional link between the TCR and coreceptors CD4 and CD8, which is needed for activation and positive selection of CD4 or CD8 T-cells. The polypeptide is T-cell surface glycoprotein CD3 delta chain (CD3D) (Macaca fascicularis (Crab-eating macaque)).